The following is a 577-amino-acid chain: Solute carrier family 22 member 16 (577 aa).

A helical transmembrane segment spans residues 23 to 43; sequence LYFICAFQNISCGIHYLASVF. N-linked (GlcNAc...) asparagine glycans are attached at residues asparagine 57, asparagine 65, asparagine 68, and asparagine 108. The next 5 helical transmembrane spans lie at 152-172, 183-203, 214-234, 244-264, and 268-288; these read WLAM…SVTF, VVLW…AFAV, FLAM…MEFI, VHLH…GYLV, and WLYQ…CWVL. 2 N-linked (GlcNAc...) asparagine glycosylation sites follow: asparagine 345 and asparagine 352. The next 6 membrane-spanning stretches (helical) occupy residues 359–379, 389–409, 416–436, 441–461, 476–496, and 501–521; these read TLTV…FSLN, LNLF…CIAM, TVLA…MVIP, ILGV…FGLI, LAVG…PFSV, and IWIF…GVLT. Residues 543 to 577 form a disordered region; it reads ESENESKSSKLLLTTNNSGLEKTEAITPRDSGLGE. 2 N-linked (GlcNAc...) asparagine glycosylation sites follow: asparagine 546 and asparagine 558. Over residues 551–560 the composition is skewed to low complexity; that stretch reads SKLLLTTNNS.

This sequence belongs to the major facilitator (TC 2.A.1) superfamily. Organic cation transporter (TC 2.A.1.19) family. In terms of tissue distribution, expressed in testis and epididymis (at protein level). Expressed in endometrium (at protein level); highly expressed during the normal secretory phase, but expression is significantly reduced in the proliferative phase. Expressed at lower levels in adult tissues including bone marrow (at protein level). Expressed in hematopoietic cells, including CD34(+) leukocytes. Expressed in fetal liver (at protein level), brain, lung, kidney, heart, skeletal muscle, spleen and thymus. Expressed in leukemia cells. Abundantly expressed in ovarian cancer clear-cell adenocarcinoma.

The protein localises to the cell membrane. It carries out the reaction (R)-carnitine(in) = (R)-carnitine(out). The enzyme catalyses spermidine(in) = spermidine(out). Functionally, facilitative organic cation transporter that mediates the transport of carnitine as well as the polyamine spermidine. Mediates the partially Na(+)-dependent bidirectional transport of carnitine. May mediate L-carnitine secretion from testis epididymal epithelium into the lumen which is involved in the maturation of spermatozoa. The sequence is that of Solute carrier family 22 member 16 from Homo sapiens (Human).